Here is a 166-residue protein sequence, read N- to C-terminus: Phosphopantetheine adenylyltransferase (166 aa).

Ser-8 contributes to the substrate binding site. ATP-binding positions include 8 to 9 (SF) and His-16. The substrate site is built by Lys-40, Thr-72, and Arg-86. ATP is bound by residues 87-89 (GLR), Glu-97, and 122-128 (YSFLSSS).

The protein belongs to the bacterial CoaD family. In terms of assembly, homohexamer. The cofactor is Mg(2+).

The protein resides in the cytoplasm. The catalysed reaction is (R)-4'-phosphopantetheine + ATP + H(+) = 3'-dephospho-CoA + diphosphate. Its pathway is cofactor biosynthesis; coenzyme A biosynthesis; CoA from (R)-pantothenate: step 4/5. Functionally, reversibly transfers an adenylyl group from ATP to 4'-phosphopantetheine, yielding dephospho-CoA (dPCoA) and pyrophosphate. This chain is Phosphopantetheine adenylyltransferase, found in Synechococcus elongatus (strain ATCC 33912 / PCC 7942 / FACHB-805) (Anacystis nidulans R2).